An 81-amino-acid polypeptide reads, in one-letter code: Sulfur carrier protein TusA (81 aa).

C19 functions as the Cysteine persulfide intermediate in the catalytic mechanism.

Belongs to the sulfur carrier protein TusA family.

The protein resides in the cytoplasm. Functionally, sulfur carrier protein which probably makes part of a sulfur-relay system. In Vibrio vulnificus (strain CMCP6), this protein is Sulfur carrier protein TusA.